Here is a 20-residue protein sequence, read N- to C-terminus: Alpha-basrubrin (20 aa).

Positions 1-13 are enriched in basic and acidic residues; sequence GADFQECMKEHSQ. A disordered region spans residues 1-20; that stretch reads GADFQECMKEHSQKQHQHQG.

Its function is as follows. Possesses antifungal activity against B.cinerea, M.arachidicola and F.oxysporum but not C.comatus and R.solani. Inhibits HIV-1 reverse transcriptase and cell-free translation. The chain is Alpha-basrubrin from Basella alba (Malabar spinach).